The sequence spans 237 residues: Carbonyl reductase family member 4 (237 aa).

NADP(+) is bound by residues 11–14 (SRGI), 34–35 (RN), Asp57, and 84–86 (AAG). Ser135 contacts substrate. NADP(+) contacts are provided by residues Tyr148, Lys152, and 181 to 183 (IHT). Tyr148 functions as the Proton acceptor in the catalytic mechanism.

Belongs to the short-chain dehydrogenases/reductases (SDR) family. In terms of assembly, homotetramer (in vitro). Heterotetramer with HSD17B8; contains two molecules each of HSD17B8 and CBR4.

The protein localises to the mitochondrion matrix. Its pathway is lipid metabolism; fatty acid biosynthesis. The heterotetramer with HSD17B8 has NADH-dependent 3-ketoacyl-acyl carrier protein reductase activity, and thereby plays a role in mitochondrial fatty acid biosynthesis. Within the heterotetramer, HSD17B8 binds NADH; CBR4 binds NADPD. The homotetramer has NADPH-dependent quinone reductase activity. Both homotetramer and the heterotetramer have broad in vitro substrate specificity and can reduce 9,10-phenanthrenequinone, 1,4-benzoquinone and various other o-quinones and p-quinones. This is Carbonyl reductase family member 4 (cbr4) from Danio rerio (Zebrafish).